Consider the following 205-residue polypeptide: RNA pyrophosphohydrolase (205 aa).

The Nudix hydrolase domain occupies 6–149; that stretch reads GFRPNVGIVL…KRGVYARALR (144 aa). The short motif at 38–59 is the Nudix box element; that stretch reads GGMNTDETPVEAMYRELREETG. The segment at 178 to 205 is disordered; the sequence is GSSAAGHDSPRKRPRKRNGARAMRINND. The segment covering 187-196 has biased composition (basic residues); the sequence is PRKRPRKRNG.

Belongs to the Nudix hydrolase family. RppH subfamily. It depends on a divalent metal cation as a cofactor.

In terms of biological role, accelerates the degradation of transcripts by removing pyrophosphate from the 5'-end of triphosphorylated RNA, leading to a more labile monophosphorylated state that can stimulate subsequent ribonuclease cleavage. This Xanthomonas axonopodis pv. citri (strain 306) protein is RNA pyrophosphohydrolase.